A 449-amino-acid polypeptide reads, in one-letter code: Guanine nucleotide-binding protein alpha-2 subunit (449 aa).

Positions 1-91 are disordered; it reads MGLCASSEKN…TATANTSGSQ (91 aa). Gly2 is lipidated: N-myristoyl glycine. Cys4 carries S-palmitoyl cysteine lipidation. 2 stretches are compositionally biased toward polar residues: residues 7-23 and 38-48; these read SEKN…SAGS and QKTVRTVNTAN. Low complexity predominate over residues 49–59; the sequence is QQEKQQQRQQQ. Residues 72-91 show a composition bias toward polar residues; that stretch reads NGSINNAISPTATANTSGSQ. A G-alpha domain is found at 122 to 448; it reads KELKVLLLGA…ENTLKDSGVL (327 aa). The segment at 125 to 138 is G1 motif; that stretch reads KVLLLGAGESGKST. GTP-binding residues include Glu133, Ser134, Gly135, Lys136, Ser137, Thr138, Asp245, Leu270, Thr276, Gly299, Asn365, Lys366, Asp368, and Ala420. Mg(2+) is bound at residue Ser137. Positions 268–276 are G2 motif; sequence DILRSRQMT. Mg(2+) is bound at residue Thr276. Residues 292 to 301 form a G3 motif region; sequence MHIYDVGGQR. A G4 motif region spans residues 361–368; sequence VLFLNKID. Residues 418–423 are G5 motif; it reads TQATDT.

The protein belongs to the G-alpha family. G(q) subfamily. As to quaternary structure, g proteins are composed of 3 units; alpha, beta and gamma. The alpha chain contains the guanine nucleotide binding site. GPA2 interacts with the kelch repeat beta-mimic proteins GPB1 and GPB2 and with the gamma subunit GPG1. Interacts with the G protein coupled receptor GPR1. Also interacts with regulators of G protein signaling (RGS) protein RGS2. Requires Mg(2+) as cofactor. Myristoylation at Gly-2 and palmitoylation at Cys-4 are required for membrane localization and function of the protein.

It localises to the cell membrane. Its activity is regulated as follows. Alternates between an inactive form bound to GDP and an active form bound to GTP. Activated by the G protein coupled receptor (GPCR) GPR1, which serves as a guanine nucleotide-exchange factor (GEF), and inactivated by RGS2, acting as a GTPase-activating protein (GAP) for GPA2. In terms of biological role, alpha subunit of the heterotrimeric guanine nucleotide-binding protein (G protein) involved in glucose-induced cAMP signaling. Binds to its cognate transmembrane receptor GPR1, which senses extracellular carbon sources, and activates cAMP-PKA signaling and governs diploid pseudohyphal differentiation and haploid invasive growth. The G protein beta-mimic proteins GPB1 and GPB2 inhibit GPA2-GPR1 coupling, probably to reduce signaling in the absence of glucose. The sequence is that of Guanine nucleotide-binding protein alpha-2 subunit (GPA2) from Saccharomyces cerevisiae (strain ATCC 204508 / S288c) (Baker's yeast).